The chain runs to 354 residues: Guanine nucleotide-binding protein alpha-3 subunit (354 aa).

Gly2 carries N-myristoyl glycine lipidation. A lipid anchor (S-palmitoyl cysteine) is attached at Cys4. Residues 32-354 form the G-alpha domain; that stretch reads KVVKLLLLGA…QANLQGCGLY (323 aa). Positions 35–48 are G1 motif; that stretch reads KLLLLGAGECGKST. GTP contacts are provided by residues 40-47, 176-182, 201-205, 270-273, and Ala326; these read GAGECGKS, LLSRIKT, DVGGQ, and NKKD. The Mg(2+) site is built by Ser47 and Thr182. Residues 174-182 are G2 motif; the sequence is DILLSRIKT. Residues 197 to 206 are G3 motif; that stretch reads FRVFDVGGQR. The segment at 266 to 273 is G4 motif; the sequence is ILFLNKKD. The G5 motif stretch occupies residues 324-329; it reads TCATDT.

It belongs to the G-alpha family. G(q) subfamily. In terms of assembly, g proteins are composed of 3 units; alpha, beta and gamma. The alpha chain contains the guanine nucleotide binding site.

Guanine nucleotide-binding proteins (G proteins) are involved as modulators or transducers in various transmembrane signaling systems. Promotes transcription of 3',5'-cyclic phosphodiesterases pde-1 and pde-5, leading to reduced cGMP levels in sensory neurons. This causes suppression of insulin production and signaling which leads to increased daf-16 activity and contributes to increased adult lifespan and resistance to oxidative stress. In addition, by reducing cGMP levels, inhibits TGF-beta signaling pathways. Involved in behavioral response to P.aeruginosa by controlling the expression of daf-7, a member of the TGF-beta family, in ASJ sensory neurons. The sequence is that of Guanine nucleotide-binding protein alpha-3 subunit (gpa-3) from Caenorhabditis briggsae.